The following is a 500-amino-acid chain: UBX domain-containing protein 5 (500 aa).

Over residues 50–61 (SNNTPTPSNSTP) the composition is skewed to low complexity. Residues 50–70 (SNNTPTPSNSTPMAPTSVDSD) form a disordered region. The residue at position 139 (Ser139) is a Phosphoserine. Disordered stretches follow at residues 142–169 (NQRL…EEND) and 371–399 (ESLN…QEPD). Positions 148–161 (TNTNTYINDNSSDS) are enriched in low complexity. Positions 415 to 493 (KPGITTRIQI…GLKNSSLLLE (79 aa)) constitute a UBX domain.

As to quaternary structure, interacts with CDC48.

Its subcellular location is the nucleus. It localises to the cytoplasm. In terms of biological role, involved in CDC48-dependent protein degradation through the ubiquitin/proteasome pathway. The sequence is that of UBX domain-containing protein 5 (UBX5) from Saccharomyces cerevisiae (strain ATCC 204508 / S288c) (Baker's yeast).